We begin with the raw amino-acid sequence, 620 residues long: UvrABC system protein C (620 aa).

One can recognise a GIY-YIG domain in the interval 13–92 (DKPGVYIMKN…IKKYSPRYNI (80 aa)). The UVR domain occupies 204 to 239 (TSIIKKLKLEMEKAAEELEFEKAAKIRDRILAIELI).

It belongs to the UvrC family. Interacts with UvrB in an incision complex.

Its subcellular location is the cytoplasm. In terms of biological role, the UvrABC repair system catalyzes the recognition and processing of DNA lesions. UvrC both incises the 5' and 3' sides of the lesion. The N-terminal half is responsible for the 3' incision and the C-terminal half is responsible for the 5' incision. This Clostridium perfringens (strain 13 / Type A) protein is UvrABC system protein C.